The following is a 165-amino-acid chain: uncharacterized protein (165 aa).

The chain crosses the membrane as a helical span at residues 10–27 (VSLTIVFVLFFSADVSLT).

It localises to the membrane. This is an uncharacterized protein from Saccharomyces cerevisiae (strain ATCC 204508 / S288c) (Baker's yeast).